We begin with the raw amino-acid sequence, 197 residues long: TLE family member 5 (197 aa).

Residues 166–197 (LSALGSQAHLSKEDKNGHDGDTHQEDDGEKSD) are CCN domain. Residues 174 to 197 (HLSKEDKNGHDGDTHQEDDGEKSD) form a disordered region. Basic and acidic residues predominate over residues 175-197 (LSKEDKNGHDGDTHQEDDGEKSD). Ser196 bears the Phosphoserine mark.

The protein belongs to the WD repeat Groucho/TLE family. In terms of assembly, homooligomer and heterooligomer with other family members. Binds TCF7. Binds the NF-kappa-B subunit RELA. Interacts with PHF12. Interacts (via Q domain) with SIX3. Interacts with SIX6. Ubiquitinated by XIAP/BIRC4. Found predominantly in muscle, heart and Placenta. In fetal tissues, abundantly expressed in the heart, lung, kidney, brain and liver.

Its subcellular location is the nucleus. Its function is as follows. Transcriptional corepressor. Acts as a dominant repressor towards other family members. Inhibits NF-kappa-B-regulated gene expression. May be required for the initiation and maintenance of the differentiated state. Essential for the transcriptional repressor activity of SIX3 during retina and lens development. The sequence is that of TLE family member 5 from Homo sapiens (Human).